The chain runs to 489 residues: Rhamnulokinase (489 aa).

Position 13–17 (13–17 (ASSGR)) interacts with ATP. The cysteines at positions 68 and 222 are disulfide-linked. Substrate contacts are provided by residues Gly83 and 236 to 238 (HDT). Asp237 (proton acceptor) is an active-site residue. Residue Thr259 participates in ATP binding. Asn296 contacts substrate. Gln304 lines the ATP pocket. Residues Cys353 and Cys370 are joined by a disulfide bond. An ATP-binding site is contributed by Gly402. The cysteines at positions 413 and 417 are disulfide-linked.

It belongs to the rhamnulokinase family. Requires Mg(2+) as cofactor.

The enzyme catalyses L-rhamnulose + ATP = L-rhamnulose 1-phosphate + ADP + H(+). The protein operates within carbohydrate degradation; L-rhamnose degradation; glycerone phosphate from L-rhamnose: step 2/3. Functionally, involved in the catabolism of L-rhamnose (6-deoxy-L-mannose). Catalyzes the transfer of the gamma-phosphate group from ATP to the 1-hydroxyl group of L-rhamnulose to yield L-rhamnulose 1-phosphate. This is Rhamnulokinase from Salmonella agona (strain SL483).